A 317-amino-acid chain; its full sequence is Glutamyl-tRNA reductase-binding protein, chloroplastic (317 aa).

A chloroplast-targeting transit peptide spans Met1–Cys42.

In terms of assembly, interacts with HEMA1 and forms a heterotetramer of two GLUTRBP and two HEMA1 subunits.

It is found in the plastid. The protein resides in the chloroplast stroma. Its function is as follows. Involved in the regulation of glutamyl-tRNA reductase (GluTR) which is important for the synthesis and distribution of 5-aminolevulinate, a precursor in heme and chlorophyll biosynthesis. Stimulates GluTR activity and regulates glutamate-1-semialdehyde release. May play a role in heme metabolism. Necessary for efficient photosynthetic electron transport in chloroplasts. The sequence is that of Glutamyl-tRNA reductase-binding protein, chloroplastic from Arabidopsis thaliana (Mouse-ear cress).